A 203-amino-acid polypeptide reads, in one-letter code: ATP-dependent Clp protease proteolytic subunit (203 aa).

Serine 103 acts as the Nucleophile in catalysis. The active site involves histidine 128.

This sequence belongs to the peptidase S14 family. In terms of assembly, fourteen ClpP subunits assemble into 2 heptameric rings which stack back to back to give a disk-like structure with a central cavity, resembling the structure of eukaryotic proteasomes.

The protein localises to the cytoplasm. It carries out the reaction Hydrolysis of proteins to small peptides in the presence of ATP and magnesium. alpha-casein is the usual test substrate. In the absence of ATP, only oligopeptides shorter than five residues are hydrolyzed (such as succinyl-Leu-Tyr-|-NHMec, and Leu-Tyr-Leu-|-Tyr-Trp, in which cleavage of the -Tyr-|-Leu- and -Tyr-|-Trp bonds also occurs).. Cleaves peptides in various proteins in a process that requires ATP hydrolysis. Has a chymotrypsin-like activity. Plays a major role in the degradation of misfolded proteins. The protein is ATP-dependent Clp protease proteolytic subunit of Nitrosococcus oceani (strain ATCC 19707 / BCRC 17464 / JCM 30415 / NCIMB 11848 / C-107).